The sequence spans 536 residues: MGAWAFPAALFLLCLTSESLQGGLPLLPPGLGKVYGPHSGLGAGYDGGVKPQKPGFVVRHGLGTQPDTEGGMKPQNLGFRTFAGAAAQPGYGNGLGAAAFPVAGAQSGPAAQNGFGPGFGGGGKPQKPGPTTQNGYRPGYVGAVKPQKPGFQYRIGLGAQPGFRGDMKAQEPGLGNGNGLSAQPVLTAQNRFGFGAGLGGNVKPLKPGYGKRLRAGAFPGAGTQPEYGHGNGPGVQPGLGAGMKPQMPGLGAPNGYGPGRGRAGVPGGPERRPWVPHLLPFSSPGYLGVMKAQKPGPLAQNGYRAGAGEGMKPQKPGLRGTLKPQKSGHGHENGPWPGPCNARVAPMLLPRLPTPGVPSDKEGGWGLKSQPPSAVQNGKLPAPMPAIQWGLKPQKAGHQPPNGYGPGAEPGFNGGLEPQKIGLGYGNGVLGARVFPEAHPQPGFHGANGFRNRDGVEALVYPKAAALAPEGNGQAGVLWNSRWPTLQAWGAGLKPGYQAGDEYAEARSQPGGPDVKRGSNGQLGNGYGGRCPLGKC.

An N-terminal signal peptide occupies residues M1–G22. Disordered stretches follow at residues A111–N134, G306–W336, and G500–C536. The span at F115 to K124 shows a compositional bias: gly residues. The span at G521–C536 shows a compositional bias: gly residues.

This chain is Glycine-rich extracellular protein 1, found in Homo sapiens (Human).